The following is a 321-amino-acid chain: NADH-ubiquinone oxidoreductase chain 1 (321 aa).

8 helical membrane-spanning segments follow: residues 5–25 (LVTL…AFLT), 74–94 (LLIL…APIP), 104–124 (LGLL…LWAG), 151–171 (GIIL…LLTI), 175–195 (YTWL…STLA), 227–247 (FFLA…ILFI), 256–276 (ELFL…FLWI), and 296–316 (FLPM…SISG).

It belongs to the complex I subunit 1 family.

The protein localises to the mitochondrion inner membrane. The catalysed reaction is a ubiquinone + NADH + 5 H(+)(in) = a ubiquinol + NAD(+) + 4 H(+)(out). In terms of biological role, core subunit of the mitochondrial membrane respiratory chain NADH dehydrogenase (Complex I) that is believed to belong to the minimal assembly required for catalysis. Complex I functions in the transfer of electrons from NADH to the respiratory chain. The immediate electron acceptor for the enzyme is believed to be ubiquinone. This is NADH-ubiquinone oxidoreductase chain 1 (MT-ND1) from Varanus baritji (Black-spotted ridge-tailed monitor).